A 312-amino-acid chain; its full sequence is Tumor necrosis factor receptor type 1-associated DEATH domain protein (312 aa).

The short motif at 147–163 is the Nuclear export signal element; that stretch reads LRDEELTELENALRNLT. Residues 166–200 are disordered; sequence SAGGQGSDVQGTPAPLQSLAPSPPEEKPPPPQPGQ. The Death domain maps to 215–305; sequence NLQDQQKFAR…SLAEDLLGLA (91 aa). The interval 222 to 289 is interaction with KRT14 and KRT18; sequence FARSVGLKWR…ATLQRLVEAL (68 aa). Positions 231–244 match the Nuclear localization signal motif; it reads RKVGRSLQRSCRAL.

In terms of assembly, stimulation of TNF-alpha receptor TNFRSF1A leads to the formation of two distinct signaling complexes. Plasma membrane-bound complex I is composed of TNFRSF1A, TRADD, RIPK1, TRAF2 and BIRC2/c-IAP1 or BIRC3 which interacts with CHUCK/IKK-alpha, IKBKB/IKK-beta and IKBKG/IKK-gamma promoting cell survival. Subsequently, TRADD, RIPK1 and TRAF2 dissociate from TNFRSF1A and form cytoplasmic complex II with FADD and caspase CASP8 promoting cell apoptosis. Within complex I, interacts with TNFRSF1A/TNFR1, TRAF2 and kinase RIPK1. Within complex I, interacts with TRPC4AP; the interaction promotes NF-kappa B activation. UXT1 associates with complex I; the interaction prevents the formation of complex II. Within complex I Interacts with scaffold protein DAB2IP. Interacts with autophagy receptor SQSTM1. Interacts with E3 ligase TRIP12. Interacts with kinase HIPK2. Interacts with keratin KRT14. Interacts with keratin KRT18. Interacts with keratins KRT16 and KRT17. Interacts with FADD. Interacts with TOMM70. Interacts with TMC8; the interaction impairs the formation of complex I and facilites complex II formation.

The protein resides in the nucleus. It localises to the cytoplasm. It is found in the cytoskeleton. Its function is as follows. Adapter molecule for TNFRSF1A/TNFR1 that specifically associates with the cytoplasmic domain of activated TNFRSF1A/TNFR1 mediating its interaction with FADD. Overexpression of TRADD leads to two major TNF-induced responses, apoptosis and activation of NF-kappa-B. The nuclear form acts as a tumor suppressor by preventing ubiquitination and degradation of isoform p19ARF/ARF of CDKN2A by TRIP12: acts by interacting with TRIP12, leading to disrupt interaction between TRIP12 and isoform p19ARF/ARF of CDKN2A. The protein is Tumor necrosis factor receptor type 1-associated DEATH domain protein of Bos taurus (Bovine).